The primary structure comprises 129 residues: MQSPLTIPVPVPVLRLPRGPDGFSRGFASDGRRTILRPEVGEGHIQDPPESQEQRARATLRERYLRSLLAMVGHPVSFTLHEGVHVTAQFGATDLDVANFYVSQLQTPIGVQAEALLRCSDIISYSFKL.

At methionine 1 the chain carries N-acetylmethionine. The region spanning 1–31 (MQSPLTIPVPVPVLRLPRGPDGFSRGFASDG) is the SUZ-C domain. Residues 63-129 (RYLRSLLAMV…SDIISYSFKL (67 aa)) form the Sm domain.

The protein belongs to the gemin-7 family. Part of the core SMN complex that contains SMN1, GEMIN2/SIP1, DDX20/GEMIN3, GEMIN4, GEMIN5, GEMIN6, GEMIN7, GEMIN8 and STRAP/UNRIP. Part of the SMN-Sm complex that contains SMN1, GEMIN2/SIP1, DDX20/GEMIN3, GEMIN4, GEMIN5, GEMIN6, GEMIN7, GEMIN8, STRAP/UNRIP and the Sm proteins SNRPB, SNRPD1, SNRPD2, SNRPD3, SNRPE, SNRPF and SNRPG. Interacts with GEMIN6; the interaction is direct. Interacts with STRAP/UNRIP; the interaction is direct. Interacts with GEMIN8; the interaction is direct. Interacts with SNRPB, SNRPD2, SNRPD3 and SNRPE; the interaction is direct.

It localises to the nucleus. It is found in the nucleoplasm. The protein resides in the gem. The protein localises to the cytoplasm. Its function is as follows. The SMN complex catalyzes the assembly of small nuclear ribonucleoproteins (snRNPs), the building blocks of the spliceosome, and thereby plays an important role in the splicing of cellular pre-mRNAs. Most spliceosomal snRNPs contain a common set of Sm proteins SNRPB, SNRPD1, SNRPD2, SNRPD3, SNRPE, SNRPF and SNRPG that assemble in a heptameric protein ring on the Sm site of the small nuclear RNA to form the core snRNP (Sm core). In the cytosol, the Sm proteins SNRPD1, SNRPD2, SNRPE, SNRPF and SNRPG are trapped in an inactive 6S pICln-Sm complex by the chaperone CLNS1A that controls the assembly of the core snRNP. To assemble core snRNPs, the SMN complex accepts the trapped 5Sm proteins from CLNS1A forming an intermediate. Binding of snRNA inside 5Sm triggers eviction of the SMN complex, thereby allowing binding of SNRPD3 and SNRPB to complete assembly of the core snRNP. The sequence is that of Gem-associated protein 7 (Gemin7) from Mus musculus (Mouse).